The sequence spans 5900 residues: Midasin (5900 aa).

The disordered stretch occupies residues 250-270; that stretch reads GSSVKSKKGGEQQQEGEGEDE. AAA-ATPase protomer stretches follow at residues 278 to 583, 673 to 1012, 1101 to 1346, 1411 to 1721, 1840 to 2089, and 2167 to 2451; these read TNTV…LRKQ, EKIS…ALNY, PIIP…IAGY, IVWT…MDKQ, RGMQ…HVLT, and LENI…EIYM. Residues 302–309 and 689–696 contribute to the ATP site; these read GVTGSGKT and GETGTGKT. The interval 796–826 is disordered; sequence QTTTNNTKENNNNNNNNNNNNNNNNNNKKRT. Over residues 797–821 the composition is skewed to low complexity; it reads TTTNNTKENNNNNNNNNNNNNNNNN. Residues 1135 to 1142, 1438 to 1445, 1852 to 1859, and 2184 to 2191 contribute to the ATP site; these read GPTSSGKT, GETGCSKT, GSPGVGKT, and GPTSTSKT. Positions 2562–4965 are linker; that stretch reads ESAIKSILCE…EGKGKKDVSD (2404 aa). The interval 4932–5598 is disordered; it reads GDDGEGGEGG…SVEEKKLTRE (667 aa). Residues 4984–5008 are compositionally biased toward acidic residues; it reads KDEDEDEEKEEKDEDEGFDMQDDFE. Residues 5009–5055 show a composition bias toward basic and acidic residues; the sequence is GEMHDIKKDENKDEDKKDDPNNEKENDKEMGDLEKPEDNVVDEKLWD. A compositionally biased stretch (acidic residues) spans 5056 to 5076; the sequence is EQDVQDEEEQDEEGKGDETNS. The segment covering 5079-5113 has biased composition (basic and acidic residues); it reads MMAKQDGKDDNDDDKKDDDKKDDKKKKKEENGKPD. Composition is skewed to acidic residues over residues 5114 to 5130 and 5139 to 5156; these read ENEE…EDGK and GASD…DDVI. A compositionally biased stretch (basic and acidic residues) spans 5159 to 5173; it reads EQEKEENHGDPRGDD. Residues 5174–5199 are compositionally biased toward acidic residues; that stretch reads QMEIPEDLELEDPDEGKEDDEQQDGG. Residues 5213–5224 are compositionally biased toward basic and acidic residues; that stretch reads DVSKEEEKKKEL. Acidic residues-rich tracts occupy residues 5225–5255 and 5273–5286; these read DGDE…EDKE and EGDE…EEDQ. A compositionally biased stretch (basic and acidic residues) spans 5297 to 5313; it reads ETPKDSEQPLGVKDKTG. Residues 5339–5349 are compositionally biased toward polar residues; the sequence is GMTQPTPSEND. Residues 5410-5442 are compositionally biased toward basic and acidic residues; the sequence is SEPKEKAPKQDPNAKENENQDYEFIKDDEKLDK. Low complexity predominate over residues 5448–5460; sequence QALAAATDTQLQD. Residues 5469–5487 show a composition bias toward acidic residues; sequence DQAEQEEDQMDIDEEDDMD. Basic and acidic residues-rich tracts occupy residues 5488 to 5536 and 5551 to 5570; these read VDHK…KDQQ and QFTK…KAVL. Positions 5571-5590 are enriched in acidic residues; the sequence is DDGDDQEMEQDGDQDDEESV. A VWFA domain is found at 5696 to 5889; the sequence is QVLLAIDDTE…NIPSILSDTL (194 aa).

It belongs to the midasin family. In terms of assembly, associates with pre-60S ribosomes in the nucleoplasm.

The protein localises to the nucleus. Its subcellular location is the nucleolus. The protein resides in the nucleoplasm. Its function is as follows. Nuclear chaperone required for maturation and nuclear export of pre-60S ribosome subunits. Functions at successive maturation steps to remove ribosomal factors at critical transition points, first driving the exit of early pre-60S particles from the nucleolus and then driving late pre-60S particles from the nucleus. In Dictyostelium discoideum (Social amoeba), this protein is Midasin (mdn1).